Reading from the N-terminus, the 140-residue chain is Sex-regulated protein janus-B (140 aa).

Residue R42 participates in substrate binding. The active-site Proton acceptor is H69. 110 to 112 (SRT) lines the substrate pocket.

It belongs to the janus family.

Functionally, janA and janB regulate somatic sex differentiation. This Drosophila simulans (Fruit fly) protein is Sex-regulated protein janus-B (janB).